Reading from the N-terminus, the 393-residue chain is Na(+)/H(+) antiporter NhaA 2 (393 aa).

Helical transmembrane passes span 18–38 (SGGLLLIASAAAALLVANSQL), 53–73 (LSVQHWVNDALMAVFFLMVGL), 91–111 (ILPGAAAAAGMAVPALVYLAF), 120–140 (GWAIPAATDIAFALGVISLLG), 149–169 (VFLAALAIIDDLGAVIVIGLF), 172–192 (TGVSLMDLGLAAAGVAALVAL), 208–228 (LVLWFFTYRSGVHATIAGVLL), 263–283 (FIIVPIFGFANAGVSFSGLGM), 294–314 (VAAGLAIGKLVGIFGAVLLLV), 332–352 (GTTLLCGIGFTMSLFISLLAF), and 363–383 (IGILIGSLVAGLAGFIVLRFS).

Belongs to the NhaA Na(+)/H(+) (TC 2.A.33) antiporter family.

Its subcellular location is the cell inner membrane. It carries out the reaction Na(+)(in) + 2 H(+)(out) = Na(+)(out) + 2 H(+)(in). Functionally, na(+)/H(+) antiporter that extrudes sodium in exchange for external protons. The polypeptide is Na(+)/H(+) antiporter NhaA 2 (Brucella anthropi (strain ATCC 49188 / DSM 6882 / CCUG 24695 / JCM 21032 / LMG 3331 / NBRC 15819 / NCTC 12168 / Alc 37) (Ochrobactrum anthropi)).